A 589-amino-acid chain; its full sequence is MSVRKNSPASPKPTSRSRESSRSPSVTDLKDHSKAKRTLCRNILLYGSCKHSENGCAFRHDGPFIPSSENLEQYSVKKKLNAASASFQPVRALPVKAAGAAVFVPKSQEKSLFLSRERTPVALSPGSHAINPYNNASMLVNEPFHDDSGVYYTRQNQFKPTLYNLYNPQPSPMPTLLPYERTVNGLFIDDTTRERIERKSEASRQTISALPSIISSYTSLAPLNTKLYRYKEQIGFSSWTYKCTSSIDGNAYVLKRLQDCSINIDTSTVDKLKNVFHPNIVPFHSAFHTDTFHDSSLLLIYDFYPCTTTLGELYLNNSKNSVKLEENRKIPERELWNYFFQLTIALSYLHKSGFACNKLTPSRILVDQTERIRISGCADYELVVSNKPPLEERKKQDFVDLGVVIANLATGRTDMDMSSAARAIYSTYSREFYKAVLYFVSEVPEDKNLELFLQNHIESFFPIMSSPYVECEKMERKISDAFQHGRFFNILCKIMFIIDNNRASREYPIAREKEISLIYLLRDYLFHQIDEDECPVIDLYQVLNRLGKLDAGINQAIALISRDELDCVSVSYGELKAWLDNVYEMEINS.

The disordered stretch occupies residues 1-32 (MSVRKNSPASPKPTSRSRESSRSPSVTDLKDH). The C3H1-type zinc finger occupies 34–63 (KAKRTLCRNILLYGSCKHSENGCAFRHDGP). The PABPC-interacting motif-2 (PAM-2) signature appears at 74-94 (YSVKKKLNAASASFQPVRALP). Residues 201–457 (EASRQTISAL…NLELFLQNHI (257 aa)) form a pseudokinase domain region. Residues lysine 255 and 302-309 (DFYPCTTT) each bind ATP. Residues 458–496 (ESFFPIMSSPYVECEKMERKISDAFQHGRFFNILCKIMF) adopt a coiled-coil conformation. The knob domain stretch occupies residues 497 to 589 (IIDNNRASRE…DNVYEMEINS (93 aa)).

The protein belongs to the protein kinase superfamily. PAN3 family. As to quaternary structure, homodimer. Forms a heterotrimer with a catalytic subunit pan2 to form the poly(A)-nuclease (PAN) deadenylation complex. Interacts (via PAM-2 motif) with poly(A)-binding protein pab1 (via PABC domain), conferring substrate specificity of the enzyme complex.

It localises to the cytoplasm. The protein resides in the nucleus. Its function is as follows. Regulatory subunit of the poly(A)-nuclease (PAN) deadenylation complex, one of two cytoplasmic mRNA deadenylases involved in mRNA turnover. PAN specifically shortens poly(A) tails of RNA and the activity is stimulated by poly(A)-binding protein pab1. PAN deadenylation is followed by rapid degradation of the shortened mRNA tails by the CCR4-NOT complex. Deadenylated mRNAs are then degraded by two alternative mechanisms, namely exosome-mediated 3'-5' exonucleolytic degradation, or deadenylation-dependent mRNA decaping and subsequent 5'-3' exonucleolytic degradation by xrn1. May also be involved in post-transcriptional maturation of mRNA poly(A) tails. ppk26/pan3 acts as a positive regulator for PAN activity, recruiting the catalytic subunit pan2 to mRNA via its interaction with RNA and with pab1. The polypeptide is PAN2-PAN3 deadenylation complex subunit pan3 (ppk26) (Schizosaccharomyces pombe (strain 972 / ATCC 24843) (Fission yeast)).